The primary structure comprises 151 residues: Putative pre-16S rRNA nuclease (151 aa).

The protein belongs to the YqgF nuclease family.

The protein resides in the cytoplasm. In terms of biological role, could be a nuclease involved in processing of the 5'-end of pre-16S rRNA. The sequence is that of Putative pre-16S rRNA nuclease from Nostoc sp. (strain PCC 7120 / SAG 25.82 / UTEX 2576).